The sequence spans 198 residues: Recombination protein RecR (198 aa).

Residues 56–71 (CTECRDFSETKICAIC) form a C4-type zinc finger. In terms of domain architecture, Toprim spans 79–174 (HQLCVVESPP…RPSRLAQGLP (96 aa)).

Belongs to the RecR family.

In terms of biological role, may play a role in DNA repair. It seems to be involved in an RecBC-independent recombinational process of DNA repair. It may act with RecF and RecO. This is Recombination protein RecR from Xylella fastidiosa (strain Temecula1 / ATCC 700964).